A 928-amino-acid chain; its full sequence is Isoleucine--tRNA ligase (928 aa).

The 'HIGH' region signature appears at proline 57–histidine 67. L-isoleucyl-5'-AMP is bound at residue glutamate 552. The short motif at lysine 593–serine 597 is the 'KMSKS' region element. Lysine 596 contributes to the ATP binding site. The Zn(2+) site is built by cysteine 887, cysteine 890, cysteine 907, and cysteine 910.

The protein belongs to the class-I aminoacyl-tRNA synthetase family. IleS type 1 subfamily. Monomer. Requires Zn(2+) as cofactor.

The protein localises to the cytoplasm. The catalysed reaction is tRNA(Ile) + L-isoleucine + ATP = L-isoleucyl-tRNA(Ile) + AMP + diphosphate. Functionally, catalyzes the attachment of isoleucine to tRNA(Ile). As IleRS can inadvertently accommodate and process structurally similar amino acids such as valine, to avoid such errors it has two additional distinct tRNA(Ile)-dependent editing activities. One activity is designated as 'pretransfer' editing and involves the hydrolysis of activated Val-AMP. The other activity is designated 'posttransfer' editing and involves deacylation of mischarged Val-tRNA(Ile). This Latilactobacillus sakei subsp. sakei (strain 23K) (Lactobacillus sakei subsp. sakei) protein is Isoleucine--tRNA ligase.